Consider the following 282-residue polypeptide: HTH-type transcriptional activator RhaR (282 aa).

In terms of domain architecture, HTH araC/xylS-type spans 179 to 277; the sequence is DKLITRLAAS…GMTPSQWRHL (99 aa). DNA-binding regions (H-T-H motif) lie at residues 196-217 and 244-267; these read DKFCDEASCSERVLRQQFRQQT and ISDISTECGFEDSNYFSVVFTRET.

As to quaternary structure, binds DNA as a dimer.

Its subcellular location is the cytoplasm. Activates expression of the rhaSR operon in response to L-rhamnose. This is HTH-type transcriptional activator RhaR from Escherichia coli O139:H28 (strain E24377A / ETEC).